Here is a 141-residue protein sequence, read N- to C-terminus: Nucleoside diphosphate kinase (141 aa).

Residues K11, F59, R87, T93, R104, and N114 each coordinate ATP. The active-site Pros-phosphohistidine intermediate is H117.

It belongs to the NDK family. In terms of assembly, homotetramer. Mg(2+) is required as a cofactor.

The protein localises to the cytoplasm. The enzyme catalyses a 2'-deoxyribonucleoside 5'-diphosphate + ATP = a 2'-deoxyribonucleoside 5'-triphosphate + ADP. The catalysed reaction is a ribonucleoside 5'-diphosphate + ATP = a ribonucleoside 5'-triphosphate + ADP. Functionally, major role in the synthesis of nucleoside triphosphates other than ATP. The ATP gamma phosphate is transferred to the NDP beta phosphate via a ping-pong mechanism, using a phosphorylated active-site intermediate. The protein is Nucleoside diphosphate kinase of Legionella pneumophila subsp. pneumophila (strain Philadelphia 1 / ATCC 33152 / DSM 7513).